The following is a 327-amino-acid chain: Lipoyl synthase (327 aa).

Residues C72, C77, C83, C98, C102, C105, and S313 each coordinate [4Fe-4S] cluster. The 220-residue stretch at 83–302 folds into the Radical SAM core domain; the sequence is CWSHGTATIM…RKVGLEKGFL (220 aa).

Belongs to the radical SAM superfamily. Lipoyl synthase family. The cofactor is [4Fe-4S] cluster.

The protein resides in the cytoplasm. The catalysed reaction is [[Fe-S] cluster scaffold protein carrying a second [4Fe-4S](2+) cluster] + N(6)-octanoyl-L-lysyl-[protein] + 2 oxidized [2Fe-2S]-[ferredoxin] + 2 S-adenosyl-L-methionine + 4 H(+) = [[Fe-S] cluster scaffold protein] + N(6)-[(R)-dihydrolipoyl]-L-lysyl-[protein] + 4 Fe(3+) + 2 hydrogen sulfide + 2 5'-deoxyadenosine + 2 L-methionine + 2 reduced [2Fe-2S]-[ferredoxin]. It functions in the pathway protein modification; protein lipoylation via endogenous pathway; protein N(6)-(lipoyl)lysine from octanoyl-[acyl-carrier-protein]: step 2/2. Catalyzes the radical-mediated insertion of two sulfur atoms into the C-6 and C-8 positions of the octanoyl moiety bound to the lipoyl domains of lipoate-dependent enzymes, thereby converting the octanoylated domains into lipoylated derivatives. This is Lipoyl synthase from Francisella tularensis subsp. mediasiatica (strain FSC147).